We begin with the raw amino-acid sequence, 504 residues long: ATP synthase subunit alpha (504 aa).

169–176 (GDRQTGKT) contacts ATP.

This sequence belongs to the ATPase alpha/beta chains family. F-type ATPases have 2 components, CF(1) - the catalytic core - and CF(0) - the membrane proton channel. CF(1) has five subunits: alpha(3), beta(3), gamma(1), delta(1), epsilon(1). CF(0) has three main subunits: a(1), b(2) and c(9-12). The alpha and beta chains form an alternating ring which encloses part of the gamma chain. CF(1) is attached to CF(0) by a central stalk formed by the gamma and epsilon chains, while a peripheral stalk is formed by the delta and b chains.

It localises to the cell membrane. The enzyme catalyses ATP + H2O + 4 H(+)(in) = ADP + phosphate + 5 H(+)(out). Produces ATP from ADP in the presence of a proton gradient across the membrane. The alpha chain is a regulatory subunit. The sequence is that of ATP synthase subunit alpha from Clostridium botulinum (strain Eklund 17B / Type B).